The following is a 423-amino-acid chain: Glucose-1-phosphate adenylyltransferase (423 aa).

Residues Y107, G172, 187–188 (EK), and S205 contribute to the alpha-D-glucose 1-phosphate site.

The protein belongs to the bacterial/plant glucose-1-phosphate adenylyltransferase family. As to quaternary structure, homotetramer.

It catalyses the reaction alpha-D-glucose 1-phosphate + ATP + H(+) = ADP-alpha-D-glucose + diphosphate. It participates in glycan biosynthesis; glycogen biosynthesis. Functionally, involved in the biosynthesis of ADP-glucose, a building block required for the elongation reactions to produce glycogen. Catalyzes the reaction between ATP and alpha-D-glucose 1-phosphate (G1P) to produce pyrophosphate and ADP-Glc. This chain is Glucose-1-phosphate adenylyltransferase, found in Albidiferax ferrireducens (strain ATCC BAA-621 / DSM 15236 / T118) (Rhodoferax ferrireducens).